Here is a 256-residue protein sequence, read N- to C-terminus: 4-oxalocrotonate decarboxylase (256 aa).

The protein belongs to the hydratase/decarboxylase family. Forms a complex with AmnF. The cofactor is Mg(2+). Mn(2+) is required as a cofactor.

The catalysed reaction is (3E)-2-oxohex-3-enedioate + H(+) = 2-oxopent-4-enoate + CO2. With respect to regulation, strongly inhibited by Fe(2+), Fe(3+), K(3)[Fe(CN)(6)], Ag(+) and Cu(2+). Involved in the modified meta-cleavage pathway for the 2-aminophenol catabolism. The protein is 4-oxalocrotonate decarboxylase (amnE) of Pseudomonas sp.